Here is a 234-residue protein sequence, read N- to C-terminus: PHD finger protein ING1 (234 aa).

A disordered region spans residues 129–166; the sequence is NNGKAGNAGEGGRGGRKKTRLATAASTAAASTGMTSSN. Low complexity predominate over residues 149-165; it reads LATAASTAAASTGMTSS. Residues 178-227 form a PHD-type zinc finger; it reads PTYCICNQVSFGEMVACDNNACKIEWFHFGCVGLKEQPKGKWYCPECATV. Residues Cys-181, Cys-183, Cys-194, Cys-199, His-205, Cys-208, Cys-221, and Cys-224 each contribute to the Zn(2+) site.

This sequence belongs to the ING family. Interacts with H3K4me3 and to a lesser extent with H3K4me2. In terms of tissue distribution, ubiquitously expressed.

It is found in the nucleus. Its function is as follows. Histone-binding component that specifically recognizes H3 tails trimethylated on 'Lys-4' (H3K4me3), which mark transcription start sites of virtually all active genes. The polypeptide is PHD finger protein ING1 (ING1) (Arabidopsis thaliana (Mouse-ear cress)).